Consider the following 146-residue polypeptide: MSILDEFKSFIAKGNVMDMAVGIIIGAAFTGIVSSLVADLINPIIGLITGGIDFSNLFVNLGDGDYVSLAAARDAGAPVFAYGSFITAVINFLIIAWVVFLLVKIVNRVKDAAIHKSAKEAEAQPAGPTQEQLLAEIRDLLKRSPA.

A run of 3 helical transmembrane segments spans residues Val21–Ile41, Ile44–Gly64, and Gly83–Val103.

It belongs to the MscL family. As to quaternary structure, homopentamer.

The protein localises to the cell inner membrane. Functionally, channel that opens in response to stretch forces in the membrane lipid bilayer. May participate in the regulation of osmotic pressure changes within the cell. In Cereibacter sphaeroides (strain ATCC 17023 / DSM 158 / JCM 6121 / CCUG 31486 / LMG 2827 / NBRC 12203 / NCIMB 8253 / ATH 2.4.1.) (Rhodobacter sphaeroides), this protein is Large-conductance mechanosensitive channel.